Consider the following 243-residue polypeptide: Bidirectional sugar transporter SWEET2a (243 aa).

Topologically, residues 1–23 are extracellular; it reads MDWAAPALTSFVADSSYRHLCCY. A helical membrane pass occupies residues 24–44; it reads GAGIAGNVFAFVLFISPLPTF. One can recognise a MtN3/slv 1 domain in the interval 24 to 111; sequence GAGIAGNVFA…AVFIAFADAK (88 aa). The Cytoplasmic portion of the chain corresponds to 45–57; it reads KRIVRNGSTEQFS. Residues 58-80 form a helical membrane-spanning segment; it reads AMPYIYSLLNCLICMWYGLPFVS. At 81-89 the chain is on the extracellular side; that stretch reads YGVVLVATV. A helical transmembrane segment spans residues 90–110; it reads NSIGAVFQLAYTAVFIAFADA. Over 111–117 the chain is Cytoplasmic; it reads KQRLKVS. A helical transmembrane segment spans residues 118–138; sequence ALLAAVFVVFGLIVFVSLALL. Over 139-145 the chain is Extracellular; that stretch reads DHPTRQM. Residues 146–166 traverse the membrane as a helical segment; the sequence is FVGYLSVASLIFMFASPLSII. In terms of domain architecture, MtN3/slv 2 spans 147–230; it reads VGYLSVASLI…VLYAYFRKGS (84 aa). Residues 167-179 lie on the Cytoplasmic side of the membrane; that stretch reads NLVIRTKSVEYMP. A helical membrane pass occupies residues 180-200; the sequence is FYLSLSMFLMSASFFGYGVLL. Over 201–202 the chain is Extracellular; it reads ND. A helical transmembrane segment spans residues 203–223; the sequence is FFIYIPNGIGTILGIIQLVLY. Residues 224 to 243 lie on the Cytoplasmic side of the membrane; sequence AYFRKGSSEEAKLPLLVTHT.

Belongs to the SWEET sugar transporter family. Forms homooligomers and/or heterooligomers.

It is found in the cell membrane. Mediates both low-affinity uptake and efflux of sugar across the plasma membrane. This Sorghum bicolor (Sorghum) protein is Bidirectional sugar transporter SWEET2a.